Reading from the N-terminus, the 137-residue chain is Large ribosomal subunit protein uL16 (137 aa).

This sequence belongs to the universal ribosomal protein uL16 family. As to quaternary structure, part of the 50S ribosomal subunit.

Binds 23S rRNA and is also seen to make contacts with the A and possibly P site tRNAs. The polypeptide is Large ribosomal subunit protein uL16 (Roseobacter denitrificans (strain ATCC 33942 / OCh 114) (Erythrobacter sp. (strain OCh 114))).